The chain runs to 264 residues: tRNA pseudouridine synthase A (264 aa).

D51 (nucleophile) is an active-site residue. Y109 is a substrate binding site.

The protein belongs to the tRNA pseudouridine synthase TruA family. In terms of assembly, homodimer.

It catalyses the reaction uridine(38/39/40) in tRNA = pseudouridine(38/39/40) in tRNA. In terms of biological role, formation of pseudouridine at positions 38, 39 and 40 in the anticodon stem and loop of transfer RNAs. The chain is tRNA pseudouridine synthase A from Vibrio atlanticus (strain LGP32) (Vibrio splendidus (strain Mel32)).